Here is a 155-residue protein sequence, read N- to C-terminus: Ribosomal RNA large subunit methyltransferase H (155 aa).

Residues leucine 73, glycine 104, and 123–128 (LSPLTL) contribute to the S-adenosyl-L-methionine site.

This sequence belongs to the RNA methyltransferase RlmH family. As to quaternary structure, homodimer.

It localises to the cytoplasm. The catalysed reaction is pseudouridine(1915) in 23S rRNA + S-adenosyl-L-methionine = N(3)-methylpseudouridine(1915) in 23S rRNA + S-adenosyl-L-homocysteine + H(+). Specifically methylates the pseudouridine at position 1915 (m3Psi1915) in 23S rRNA. The sequence is that of Ribosomal RNA large subunit methyltransferase H from Pseudomonas entomophila (strain L48).